The chain runs to 512 residues: MKKTTLLVILDGWGYSDSDYFNAIKNANTPTWDSIWQEFPKTLINASSLEVGLPRGQMGNSEVGHVNIGCGRVVYQELTKIDKAIEEKTFGDNKAIGAAIDNVIKNDSNLHLIGLLSPGGVHSHEEHIFEMIKIAKQKGIKRLYLHAFLDGRDTPPRSAEKSIKKADKLLQDLNLGYIASVCGRYYAMDRDNRWDRVEKAYNAIVNANADFIYDSALEALEQSYARDQSDEFVIPTCIKKDGHLVKVQDNDSVIFMNFRADRAREISHAFTDESFDHFPRKKHLNINFTTLTEYDSKLKCAVAFPPEQPINTLGEVLMKNHKTQLRIAETEKYPHVTFFFNGGREEQFEGEDRILIPSPKVATYDLQPEMSAPEVTDKLVAAINSGKYDCIVCNYANSDMVGHTGNYEAAMQAIEYLDKCIARLKDAILEHDGNMFITADHGNADMMVNPETQKPHTAHTTNLVPFVYVGHKKAQVALEHGKLSDIAPTLLNVMGIAQPKEMTGKTIFNFEK.

D11 and S61 together coordinate Mn(2+). S61 (phosphoserine intermediate) is an active-site residue. Substrate is bound by residues H122, 152-153 (RD), R184, R190, 259-262 (RADR), and K332. Mn(2+) is bound by residues D399, H403, D440, H441, and H459.

It belongs to the BPG-independent phosphoglycerate mutase family. In terms of assembly, monomer. Requires Mn(2+) as cofactor.

It carries out the reaction (2R)-2-phosphoglycerate = (2R)-3-phosphoglycerate. It functions in the pathway carbohydrate degradation; glycolysis; pyruvate from D-glyceraldehyde 3-phosphate: step 3/5. In terms of biological role, catalyzes the interconversion of 2-phosphoglycerate and 3-phosphoglycerate. The polypeptide is 2,3-bisphosphoglycerate-independent phosphoglycerate mutase (Francisella tularensis subsp. novicida (strain U112)).